A 103-amino-acid chain; its full sequence is uncharacterized protein (103 aa).

Residues 1–10 are compositionally biased toward basic residues; it reads MVVKKSKPKN. 2 disordered regions span residues 1-38 and 77-103; these read MVVK…KGKK and AVFS…NEKK.

This is an uncharacterized protein from Schizosaccharomyces pombe (strain 972 / ATCC 24843) (Fission yeast).